We begin with the raw amino-acid sequence, 241 residues long: Carboxy-S-adenosyl-L-methionine synthase (241 aa).

Residues Y38, 63–65 (GCS), 88–89 (DN), 116–117 (DI), N131, and R198 each bind S-adenosyl-L-methionine.

It belongs to the class I-like SAM-binding methyltransferase superfamily. Cx-SAM synthase family. In terms of assembly, homodimer.

It catalyses the reaction prephenate + S-adenosyl-L-methionine = carboxy-S-adenosyl-L-methionine + 3-phenylpyruvate + H2O. Catalyzes the conversion of S-adenosyl-L-methionine (SAM) to carboxy-S-adenosyl-L-methionine (Cx-SAM). This Actinobacillus pleuropneumoniae serotype 3 (strain JL03) protein is Carboxy-S-adenosyl-L-methionine synthase.